The chain runs to 615 residues: NEDD8 ultimate buster 1 (615 aa).

Coiled-coil stretches lie at residues 36–70 (LALK…AIER) and 152–203 (KAMV…AAET). UBA domains are found at residues 374-413 (YIDP…HITN), 424-470 (EEKE…LLSN), and 489-529 (SPSQ…LAHN). The short motif at 414–431 (RREELAQIRKEEKEKKRR) is the Nuclear localization signal element. The NEDD8-binding 1 stretch occupies residues 427–474 (EKKRRRLENIRFLKGMGYSTHAAQQVLHAASGNLDEALKILLSNPQMW). Positions 532-586 (SLPPELPLSPEDSLSPPATSPSDSAGTSSASTDEDMETEAVNEILEDIPEHEEDY) are disordered. Low complexity predominate over residues 539–562 (LSPEDSLSPPATSPSDSAGTSSAS). The interval 550-598 (TSPSDSAGTSSASTDEDMETEAVNEILEDIPEHEEDYLDSTLEDEEIII) is NEDD8-binding 2. The segment covering 563–586 (TDEDMETEAVNEILEDIPEHEEDY) has biased composition (acidic residues).

In terms of assembly, directly interacts with NEDD8 and PSMD4/S5a, a member of the regulatory subunit of the 26S proteasome. Isoform 1 binds to NEDD8 more efficiently than isoform 2. Interacts with AIPL1. The interaction with UBD via UBA domains facilitates the linking of UBD-conjugated target protein to the proteasome complex and accelerates UBD degradation and that of its conjugates. In terms of tissue distribution, widely expressed with lowest expression in the pancreas for isoform 1 and in leukocytes, liver, prostate and skeletal muscle for isoform 2.

The protein resides in the nucleus. Specific down-regulator of the NEDD8 conjugation system. Recruits NEDD8, UBD, and their conjugates to the proteasome for degradation. Isoform 1 promotes the degradation of NEDD8 more efficiently than isoform 2. The chain is NEDD8 ultimate buster 1 (NUB1) from Homo sapiens (Human).